The sequence spans 487 residues: Probable cobyric acid synthase (487 aa).

The GATase cobBQ-type domain occupies 249 to 435 (DVDIAVVRFP…LHGIFNNASF (187 aa)). The active-site Nucleophile is C328. H427 is a catalytic residue.

It belongs to the CobB/CobQ family. CobQ subfamily.

Its pathway is cofactor biosynthesis; adenosylcobalamin biosynthesis. Its function is as follows. Catalyzes amidations at positions B, D, E, and G on adenosylcobyrinic A,C-diamide. NH(2) groups are provided by glutamine, and one molecule of ATP is hydrogenolyzed for each amidation. This Methanocella arvoryzae (strain DSM 22066 / NBRC 105507 / MRE50) protein is Probable cobyric acid synthase.